The chain runs to 1257 residues: MNTSVLNVNGITFTIYDSYTPQVIYMIIADRLNTTTRMVWFPEFVSTVSDDAPRSGVHSAVDMYMYIRDMVSPSNADGPRSLSDAVQMVKSWVDRDPESNTKFVEHCIIDAYTSNREVNDDVDAQTCVLLDAIITQDVTGNDIHGPEYYREVVRSFRDRCMEHSRNIAANKRLVPMYVTMYSNWSNTTAPTMANMDVEAIRGKYTVYVPEPDERPTVILFNDLVMSEDLVVFAKYGEWLKYDARHPPTADTALSAMSRRTGTKVNNRERNHIALFMVRRGIYSPGMTYDIAHVYPAPGVGYTISVLSNNAPTVDVPRSITTAMGLGGDGIEVSDAGGGVTYTASFVLNDITFVTEYLQHFTLMKCTNKATCIFIDETHLMRHAKEWRRFTISSPRFIYEYNNYTVRFSVTVESTRRDVARVAPYSRIRIYDAPNTNVLYGIANDITSHMIQYKSEELDILKFYTEHLHTDELLNINVRVLRDSKRVKRTPGQLAGQHRQVRRRIQAQRDGDHVDVRSIINVNNYARQCAKLPTVVRSVDLVPDGKEHITFSPGRGLPDVYLYCNHDDAPYPGLAANRLAGNSDEHPFLPCCYRVRRNAAADACDNDSLAPEVRSQTFYNTQRVLPLTAFGKCPGNLEAMLAVQRYCRSTDTNSATFYPKEKVVQGATAVRGAVQVGPNAAIEAVMRAVHCLQSSTADPRSLVIGAEQLERERSKMMEYITCAGQELFDMSSGERLSWLKDNTSYFDPLRLVKLLQYHFDTNVFLYVRGSTVKPVRSIAKTESQRVRLKFYDDYTQAWNDNEDVLSIPYHYAGADYHDMKIHERSVVLYVHSGTEITTLAHPHVEYVLFENHCYITDTIRKTYQALLPQPMRAVYSFVYFDVDDATEEELDVDTANALRAIYYVSKGKQLSAHWRDVAVANSDKTAPRSQTIDGVGRLIGMDGVQLETIRSVEPLPSLPIDNHHHSMFSFHDNMNRRELLNPEHSAKCTYTWYLSKLTRVLLHLTAYTILKKGTLMSELFTVDERRFNLLHDTINSLFEAGVVDRASYMNLLIVEQDRVLTDSVDTARRLVYNASLLLRRMSAYETSEIRKSRYITELLRYETDFTSDESPFSIVTSIDKFILKPRPKTVSLFRPPLSLKHDDTNTVLVQYSVDKHYLSRRVDDAELMRLSDAMRSNTFKEISFDMFDTLYGNGDDADVRERERTSPTLILHVWRNETSSWTVLECTDDVDSEYAGVYFHLNAADPKDRITLKRLTLC.

Belongs to the ascovirus HvAV ORF146 family.

The protein localises to the virion. This Noctuidae (owlet moths) protein is Putative structural protein ORF146.